The chain runs to 257 residues: NH(3)-dependent NAD(+) synthetase (257 aa).

Position 40 to 47 (40 to 47 (GISGGIDS)) interacts with ATP. Aspartate 46 is a Mg(2+) binding site. Arginine 121 contacts deamido-NAD(+). Threonine 141 serves as a coordination point for ATP. Mg(2+) is bound at residue glutamate 146. Residues lysine 154 and aspartate 161 each contribute to the deamido-NAD(+) site. 2 residues coordinate ATP: lysine 170 and serine 192. 238-239 (HK) lines the deamido-NAD(+) pocket.

This sequence belongs to the NAD synthetase family. Homodimer.

The catalysed reaction is deamido-NAD(+) + NH4(+) + ATP = AMP + diphosphate + NAD(+) + H(+). It participates in cofactor biosynthesis; NAD(+) biosynthesis; NAD(+) from deamido-NAD(+) (ammonia route): step 1/1. Functionally, catalyzes the ATP-dependent amidation of deamido-NAD to form NAD. Uses ammonia as a nitrogen source. This chain is NH(3)-dependent NAD(+) synthetase, found in Mycoplasmopsis pulmonis (strain UAB CTIP) (Mycoplasma pulmonis).